The following is a 402-amino-acid chain: GDSL esterase/lipase At1g20120 (402 aa).

The signal sequence occupies residues 1–35 (MLQDRVSGSLSSSKISRCVLFLSLFCFFLLTMHAS). The segment at 41–69 (RVPNPGPSPAPEPKPCPSPGPNPAPATTK) is disordered. Over residues 44–64 (NPGPSPAPEPKPCPSPGPNPA) the composition is skewed to pro residues. A glycan (N-linked (GlcNAc...) asparagine) is linked at asparagine 73. Catalysis depends on serine 85, which acts as the Nucleophile. N-linked (GlcNAc...) asparagine glycosylation is found at asparagine 314 and asparagine 367. Active-site residues include aspartate 375 and histidine 378.

The protein belongs to the 'GDSL' lipolytic enzyme family.

The protein resides in the secreted. The protein is GDSL esterase/lipase At1g20120 of Arabidopsis thaliana (Mouse-ear cress).